The primary structure comprises 147 residues: Large ribosomal subunit protein uL15 (147 aa).

Polar residues predominate over residues 1 to 10 (MYLNTLSPNS). The disordered stretch occupies residues 1-48 (MYLNTLSPNSKSHKKSKRVGRGIGSGFGKTSGRGHKGQKSRSGCKIRR). Positions 11 to 20 (KSHKKSKRVG) are enriched in basic residues. Over residues 21 to 31 (RGIGSGFGKTS) the composition is skewed to gly residues. Residues 32–47 (GRGHKGQKSRSGCKIR) are compositionally biased toward basic residues.

The protein belongs to the universal ribosomal protein uL15 family. As to quaternary structure, part of the 50S ribosomal subunit.

Functionally, binds to the 23S rRNA. This Buchnera aphidicola subsp. Baizongia pistaciae (strain Bp) protein is Large ribosomal subunit protein uL15.